Consider the following 155-residue polypeptide: Large-conductance mechanosensitive channel (155 aa).

2 helical membrane passes run 25 to 45 and 98 to 118; these read VLDLAVGVIIGGAFGKIVTSL and GDFITQAVNFVIVAFIIFLIV.

This sequence belongs to the MscL family. Homopentamer.

It localises to the cell inner membrane. Functionally, channel that opens in response to stretch forces in the membrane lipid bilayer. May participate in the regulation of osmotic pressure changes within the cell. This chain is Large-conductance mechanosensitive channel, found in Novosphingobium aromaticivorans (strain ATCC 700278 / DSM 12444 / CCUG 56034 / CIP 105152 / NBRC 16084 / F199).